The sequence spans 148 residues: Lysozyme C (148 aa).

The signal sequence occupies residues 1–18 (MKAVIILGLVLLSVTVQG). A C-type lysozyme domain is found at 19-148 (KIFERCELAR…VSQYVQGCGV (130 aa)). 4 cysteine pairs are disulfide-bonded: Cys24–Cys146, Cys48–Cys134, Cys83–Cys99, and Cys95–Cys113. Catalysis depends on residues Glu53 and Asp71.

Belongs to the glycosyl hydrolase 22 family. As to quaternary structure, monomer.

It is found in the secreted. It carries out the reaction Hydrolysis of (1-&gt;4)-beta-linkages between N-acetylmuramic acid and N-acetyl-D-glucosamine residues in a peptidoglycan and between N-acetyl-D-glucosamine residues in chitodextrins.. Functionally, lysozymes have primarily a bacteriolytic function; those in tissues and body fluids are associated with the monocyte-macrophage system and enhance the activity of immunoagents. This chain is Lysozyme C (LYZ), found in Papio anubis (Olive baboon).